The chain runs to 248 residues: Protein LIFEGUARD 3 (248 aa).

Transmembrane regions (helical) follow at residues 42–62 (VYSI…TVVT), 74–94 (GLGL…LCPL), 105–125 (YLLL…TCAF), 130–150 (VILE…LYTF), 165–185 (FLFG…LFPL), 188–208 (VSVM…IVYD), and 222–242 (IWAA…LLTV).

Belongs to the BI1 family.

It is found in the membrane. The polypeptide is Protein LIFEGUARD 3 (Arabidopsis thaliana (Mouse-ear cress)).